The primary structure comprises 294 residues: Elongation factor Ts, mitochondrial 2 (294 aa).

This sequence belongs to the EF-Ts family.

The protein resides in the mitochondrion. In terms of biological role, associates with the EF-Tu.GDP complex and induces the exchange of GDP to GTP. It remains bound to the aminoacyl-tRNA.EF-Tu.GTP complex up to the GTP hydrolysis stage on the ribosome. This chain is Elongation factor Ts, mitochondrial 2, found in Paramecium tetraurelia.